A 155-amino-acid chain; its full sequence is Endoribonuclease YbeY (155 aa).

Residues His114, His118, and His124 each coordinate Zn(2+).

It belongs to the endoribonuclease YbeY family. Zn(2+) is required as a cofactor.

It localises to the cytoplasm. Single strand-specific metallo-endoribonuclease involved in late-stage 70S ribosome quality control and in maturation of the 3' terminus of the 16S rRNA. The protein is Endoribonuclease YbeY of Escherichia coli O157:H7.